The sequence spans 751 residues: WD repeat-containing protein 91 (751 aa).

Positions 183–205 (QKIACLQEENEIMRQKLFALQAE) form a coiled coil. Residues 237–398 (ELGSNIMSSH…GARKEEKPAQ (162 aa)) are disordered. The span at 238-267 (LGSNIMSSHSNTNMNTPSQRTSGFLSSLLA) shows a compositional bias: polar residues. Residues 356 to 373 (TEKKAENSDADPDLRSDT) show a composition bias toward basic and acidic residues. WD repeat units lie at residues 410-449 (EHHSSIMHCRVDCSGRRVASLDVDGVIKIWSLDGIMQTKA), 452-492 (ISKS…NLCE), 517-559 (SAAA…QQLQ), 564-603 (PVPIAVNCTAFNHNGNLLVTGAADGFIRLFDMQQHQCALS), 606-645 (AHMGEVYSVDFSYDENAVYSIGEDGKFIQWDIHKSGQKVS), 668-706 (VQFPRGRLFAFDSEGKYMLTCSSTGGVIYKLNSDGSTLE), and 713-751 (GHRAPVVTVDWSTAVECGTCLTASMDGKIKLTTLLAQKS).

It belongs to the WD repeat WDR91 family.

The protein resides in the early endosome membrane. Its subcellular location is the late endosome membrane. Its function is as follows. Functions as a negative regulator of the PI3 kinase/PI3K activity associated with endosomal membranes. By modifying the phosphatidylinositol 3-phosphate/PtdInsP3 content of endosomal membranes may regulate endosome fusion, recycling, sorting and early to late endosome transport. The polypeptide is WD repeat-containing protein 91 (Xenopus tropicalis (Western clawed frog)).